Reading from the N-terminus, the 77-residue chain is Small ribosomal subunit protein uS17 (77 aa).

It belongs to the universal ribosomal protein uS17 family. As to quaternary structure, part of the 30S ribosomal subunit.

In terms of biological role, one of the primary rRNA binding proteins, it binds specifically to the 5'-end of 16S ribosomal RNA. In Rickettsia conorii (strain ATCC VR-613 / Malish 7), this protein is Small ribosomal subunit protein uS17.